A 306-amino-acid polypeptide reads, in one-letter code: Homeobox protein Hox-C13a (306 aa).

The interval 68-90 is disordered; sequence SVYSDISSPDTGRQCPAPQTSSS. Positions 236–295 form a DNA-binding region, homeobox; sequence GRKKRVPYTKLQLKELEKEYAASKFITKDKRRRISAATNLSERQVTIWFQNRRVKEKKFI.

It belongs to the Abd-B homeobox family.

The protein localises to the nucleus. Sequence-specific transcription factor which is part of a developmental regulatory system that provides cells with specific positional identities on the anterior-posterior axis. This Takifugu rubripes (Japanese pufferfish) protein is Homeobox protein Hox-C13a (hoxc13a).